We begin with the raw amino-acid sequence, 132 residues long: Capsid protein (132 aa).

This sequence belongs to the Leviviricetes capsid protein family. Homodimer. The capsid protein dimer binds to the viral RNA via an operator hairpin, but also many other RNA sequences in the viral genome.

Its subcellular location is the virion. Functionally, capsid protein self-assembles to form an icosahedral capsid with a T=3 symmetry, about 26 nm in diameter, and consisting of 89 capsid proteins dimers (178 capsid proteins). Involved in viral genome encapsidation through the interaction between a capsid protein dimer and the multiple packaging signals present in the RNA genome. Binding of the capsid proteins to the viral RNA induces a conformational change required for efficient T=3 shell formation. The capsid also contains 1 copy of the A2 maturation protein. In terms of biological role, acts as a translational repressor of viral replicase synthesis late in infection. This latter function is the result of capsid protein interaction with an RNA hairpin which contains the replicase ribosome-binding site. The protein is Capsid protein of Enterobacteria phage SP (Bacteriophage SP).